Consider the following 205-residue polypeptide: uncharacterized protein (205 aa).

The Nudix hydrolase domain maps to 51–189 (ANVDAVAILA…KKGFAIDVRL (139 aa)). The Nudix box motif lies at 90–111 (GLVDSKESCEDAAIRELREETG).

The protein belongs to the Nudix hydrolase family.

The protein resides in the cytoplasm. It localises to the nucleus. This is an uncharacterized protein from Schizosaccharomyces pombe (strain 972 / ATCC 24843) (Fission yeast).